The chain runs to 498 residues: Ammonium transporter 1 member 3 (498 aa).

11 helical membrane-spanning segments follow: residues 41–61 (LLFS…LCAG), 76–96 (VLDA…FAFG), 122–142 (FFLF…GSIA), 150–170 (YLIY…HWFW), 194–214 (FAGS…GAFI), 238–258 (LVVL…PGSF), 277–299 (AVGR…TLYG), 307–327 (WNVT…TAGC), 329–349 (VVDP…LIGC), 362–382 (LEAT…TALF), and 414–434 (IVQI…LFYV). The tract at residues 473–498 (RAKSAAETARVEPRKSPEQAAAGQFV) is disordered.

It belongs to the ammonia transporter channel (TC 1.A.11.2) family. Expressed in roots.

It localises to the membrane. In terms of biological role, ammonium transporter probably involved in ammonium uptake from the soil. The polypeptide is Ammonium transporter 1 member 3 (AMT1-3) (Oryza sativa subsp. japonica (Rice)).